A 692-amino-acid chain; its full sequence is Elongation factor G (692 aa).

One can recognise a tr-type G domain in the interval 8-283 (KNTRNIGIMA…AVVDYLPSPV (276 aa)). GTP contacts are provided by residues 17–24 (AHIDAGKT), 81–85 (DTPGH), and 135–138 (NKMD).

The protein belongs to the TRAFAC class translation factor GTPase superfamily. Classic translation factor GTPase family. EF-G/EF-2 subfamily.

The protein resides in the cytoplasm. Catalyzes the GTP-dependent ribosomal translocation step during translation elongation. During this step, the ribosome changes from the pre-translocational (PRE) to the post-translocational (POST) state as the newly formed A-site-bound peptidyl-tRNA and P-site-bound deacylated tRNA move to the P and E sites, respectively. Catalyzes the coordinated movement of the two tRNA molecules, the mRNA and conformational changes in the ribosome. This is Elongation factor G from Exiguobacterium sp. (strain ATCC BAA-1283 / AT1b).